A 665-amino-acid polypeptide reads, in one-letter code: MAGLSGAQIPDGEFTAVVYRLIRNARYAEAVQLLGGELQRSPRSRAGLSLLGYCYYRLQEFALAAECYEQLGQLHPELEQYRLYQAQALYKACLYAEATRVAFLLLDNPAYHSRVLRLQAAIKYSEGDLPGSRSLVEQLPSREGGEESGGENETDGQINLGCLLYKEGQYEAACSKFFAALQASGYQPDLSYNLALAYYSSRQYASALKHIAEIIERGIRQHPELGVGMTTEGIDVRSVGNTLVLHQTALVEAFNLKAAIEYQLRNYEAAQEALTDMPPRAEEELDPVTLHNQALMNMDARPTEGFEKLQFLLQQNPFPPETFGNLLLLYCKYEYFDLAADVLAENAHLIYKFLTPYLYDFLDAVITCQTAPEEAFIKLDGLAGMLTEVLRKLTIQVQEARHNRDDEAIKKAVNEYDETMEKYIPVLMAQAKIYWNLENYPMVEKIFRKSVEFCNDHDVWKLNVAHVLFMQENKYKEAIGFYEPIVKKHYDNILNVSAIVLANLCVSYIMTSQNEEAEELMRKIEKEEEQLSYDDPDKKMYHLCIVNLVIGTLYCAKGNYDFGISRVIKSLEPYNKKLGTDTWYYAKRCFLSLLENMSKHTIMLRDSVIQECVQFLEHCELHGRNIPAVIEQPLEEERMHVGKNTVTYESRQLKALIYEIIGWNI.

TPR repeat units follow at residues Asp11–Ser44, Arg45–Leu78, Thr154–Gln187, Asp189–Gln221, Leu393–Ile424, Pro425–His457, and Val459–Asn492. The disordered stretch occupies residues Pro130–Thr154. Residues Tyr508 to Asp535 adopt a coiled-coil conformation. A TPR 8 repeat occupies Cys544 to Lys577.

Belongs to the TTC30/dfy-1/fleer family. In terms of assembly, interacts with the IFT B complex components IFT27, IFT46, IFT74, IFT52, IFT57, IFT80, IFT81 and IFT88. Interacts with KIF17.

It is found in the cell projection. The protein resides in the cilium. In terms of biological role, required for polyglutamylation of axonemal tubulin. Plays a role in anterograde intraflagellar transport (IFT), the process by which cilia precursors are transported from the base of the cilium to the site of their incorporation at the tip. The polypeptide is Intraflagellar transport protein 70B (Homo sapiens (Human)).